Here is a 249-residue protein sequence, read N- to C-terminus: Adenosylcobinamide-GDP ribazoletransferase (249 aa).

The next 6 membrane-spanning stretches (helical) occupy residues methionine 32–glycine 52, alanine 53–isoleucine 73, isoleucine 107–leucine 127, alanine 136–proline 156, leucine 190–alanine 210, and threonine 224–valine 244.

It belongs to the CobS family. Mg(2+) is required as a cofactor.

The protein resides in the cell membrane. The catalysed reaction is alpha-ribazole + adenosylcob(III)inamide-GDP = adenosylcob(III)alamin + GMP + H(+). It carries out the reaction alpha-ribazole 5'-phosphate + adenosylcob(III)inamide-GDP = adenosylcob(III)alamin 5'-phosphate + GMP + H(+). It participates in cofactor biosynthesis; adenosylcobalamin biosynthesis; adenosylcobalamin from cob(II)yrinate a,c-diamide: step 7/7. Functionally, joins adenosylcobinamide-GDP and alpha-ribazole to generate adenosylcobalamin (Ado-cobalamin). Also synthesizes adenosylcobalamin 5'-phosphate from adenosylcobinamide-GDP and alpha-ribazole 5'-phosphate. This Herpetosiphon aurantiacus (strain ATCC 23779 / DSM 785 / 114-95) protein is Adenosylcobinamide-GDP ribazoletransferase.